The primary structure comprises 705 residues: Elongation factor G (705 aa).

A tr-type G domain is found at 7–287; that stretch reads HLTRNIGIMA…YVCAFLPSPL (281 aa). GTP-binding positions include 16–23, 84–88, and 138–141; these read AHIDAGKT, DTPGH, and NKMD. The interval 293–312 is disordered; the sequence is VGTNPTTGAEEDRKPSEDEK. Over residues 302 to 312 the composition is skewed to basic and acidic residues; sequence EEDRKPSEDEK.

This sequence belongs to the TRAFAC class translation factor GTPase superfamily. Classic translation factor GTPase family. EF-G/EF-2 subfamily.

Its subcellular location is the cytoplasm. Its function is as follows. Catalyzes the GTP-dependent ribosomal translocation step during translation elongation. During this step, the ribosome changes from the pre-translocational (PRE) to the post-translocational (POST) state as the newly formed A-site-bound peptidyl-tRNA and P-site-bound deacylated tRNA move to the P and E sites, respectively. Catalyzes the coordinated movement of the two tRNA molecules, the mRNA and conformational changes in the ribosome. This is Elongation factor G from Phocaeicola vulgatus (strain ATCC 8482 / DSM 1447 / JCM 5826 / CCUG 4940 / NBRC 14291 / NCTC 11154) (Bacteroides vulgatus).